We begin with the raw amino-acid sequence, 173 residues long: NADH-ubiquinone oxidoreductase chain 6 (173 aa).

The next 5 helical transmembrane spans lie at 1–21 (MTYFMLFLGLCFVLGGLAVAS), 27–47 (YGVVGLVLASVVGCGWLMSLG), 48–68 (MSFVSLVLFMVYLGGMLVVFV), 87–107 (VVGYGVSFIVVLAAGAVVGGL), and 139–159 (CGVGMFLVAGWGLLLTLFVVL).

It belongs to the complex I subunit 6 family.

It is found in the mitochondrion membrane. It catalyses the reaction a ubiquinone + NADH + 5 H(+)(in) = a ubiquinol + NAD(+) + 4 H(+)(out). Functionally, core subunit of the mitochondrial membrane respiratory chain NADH dehydrogenase (Complex I) that is believed to belong to the minimal assembly required for catalysis. Complex I functions in the transfer of electrons from NADH to the respiratory chain. The immediate electron acceptor for the enzyme is believed to be ubiquinone. The chain is NADH-ubiquinone oxidoreductase chain 6 (MT-ND6) from Synthliboramphus antiquus (Ancient murrelet).